Here is a 133-residue protein sequence, read N- to C-terminus: Holo-[acyl-carrier-protein] synthase (133 aa).

Residues Asp-8 and Glu-56 each contribute to the Mg(2+) site.

This sequence belongs to the P-Pant transferase superfamily. AcpS family. Requires Mg(2+) as cofactor.

It is found in the cytoplasm. It catalyses the reaction apo-[ACP] + CoA = holo-[ACP] + adenosine 3',5'-bisphosphate + H(+). Transfers the 4'-phosphopantetheine moiety from coenzyme A to a Ser of acyl-carrier-protein. In Clostridium perfringens (strain SM101 / Type A), this protein is Holo-[acyl-carrier-protein] synthase.